Consider the following 568-residue polypeptide: Serine/threonine-protein kinase WNK2 (568 aa).

Residues 24–281 (GRYDEILGKG…ALELLQDPFL (258 aa)) form the Protein kinase domain. ATP is bound by residues 104-107 (TELF) and Lys-154. Asp-171 functions as the Proton acceptor in the catalytic mechanism. The interval 453–473 (SSGEKSHHNHHEFDSSEDKSC) is disordered. The segment covering 463-472 (HEFDSSEDKS) has biased composition (basic and acidic residues).

Belongs to the protein kinase superfamily. Ser/Thr protein kinase family. WNK subfamily. In terms of processing, autophosphorylated.

It carries out the reaction L-seryl-[protein] + ATP = O-phospho-L-seryl-[protein] + ADP + H(+). It catalyses the reaction L-threonyl-[protein] + ATP = O-phospho-L-threonyl-[protein] + ADP + H(+). Functionally, regulates flowering time by modulating the photoperiod pathway. Possesses kinase activity in vitro. The polypeptide is Serine/threonine-protein kinase WNK2 (WNK2) (Arabidopsis thaliana (Mouse-ear cress)).